A 363-amino-acid polypeptide reads, in one-letter code: Molybdenum import ATP-binding protein ModC (363 aa).

Positions 1-232 constitute an ABC transporter domain; the sequence is MLDLDLRRRQ…PGLRPLTGRY (232 aa). 30 to 37 contacts ATP; it reads GRSGSGKT. The Mop domain maps to 292–358; it reads RVSIRNVLPA…IKALTIARGD (67 aa).

This sequence belongs to the ABC transporter superfamily. Molybdate importer (TC 3.A.1.8) family. As to quaternary structure, the complex is composed of two ATP-binding proteins (ModC), two transmembrane proteins (ModB) and a solute-binding protein (ModA).

Its subcellular location is the cell inner membrane. The enzyme catalyses molybdate(out) + ATP + H2O = molybdate(in) + ADP + phosphate + H(+). Part of the ABC transporter complex ModABC involved in molybdenum import. Responsible for energy coupling to the transport system. In Paramagnetospirillum magneticum (strain ATCC 700264 / AMB-1) (Magnetospirillum magneticum), this protein is Molybdenum import ATP-binding protein ModC.